We begin with the raw amino-acid sequence, 387 residues long: MKKGIAILGSTGSIGTQALDVIDHHPGRFRVVALAAGRQVERLAEQALRFRPALLSVADADAAAALRALLLAEAGDYRPEIAWGREGLIRAATHPESGLVLTSVVGAMGVEPTLAAIEAGKDIALANKETLVAAGELVTAAAQARGVKLLPVDSEHSAIFQSLAGADPGSVRRILLTASGGPFRGRKDLTGVTREEALRHPRWTMGAKVTIDSATLMNKALEMIEAHWLFGVPMEQIEVIVHPQSILHSAVEFCDGNIIAQLGPTDMRLPIQYALCYPERCRGFVEPLDLIALGALTFERPDEETFPSLRYARRAVTMGGTMPAVLNAANEVAVQRFLAGEIPFTGIFQLVAGVMDRHDPVQRPDLAAILAADRWARDAAREQPVRM.

Positions 11, 12, 13, 14, 37, 38, 39, and 127 each coordinate NADPH. A 1-deoxy-D-xylulose 5-phosphate-binding site is contributed by Lys128. NADPH is bound at residue Glu129. Mn(2+) is bound at residue Asp153. Ser154, Glu155, Ser179, and His200 together coordinate 1-deoxy-D-xylulose 5-phosphate. Residue Glu155 coordinates Mn(2+). Gly206 serves as a coordination point for NADPH. Ser213, Asn218, Lys219, and Glu222 together coordinate 1-deoxy-D-xylulose 5-phosphate. Residue Glu222 participates in Mn(2+) binding.

This sequence belongs to the DXR family. Requires Mg(2+) as cofactor. It depends on Mn(2+) as a cofactor.

It catalyses the reaction 2-C-methyl-D-erythritol 4-phosphate + NADP(+) = 1-deoxy-D-xylulose 5-phosphate + NADPH + H(+). The protein operates within isoprenoid biosynthesis; isopentenyl diphosphate biosynthesis via DXP pathway; isopentenyl diphosphate from 1-deoxy-D-xylulose 5-phosphate: step 1/6. Its function is as follows. Catalyzes the NADPH-dependent rearrangement and reduction of 1-deoxy-D-xylulose-5-phosphate (DXP) to 2-C-methyl-D-erythritol 4-phosphate (MEP). The chain is 1-deoxy-D-xylulose 5-phosphate reductoisomerase from Symbiobacterium thermophilum (strain DSM 24528 / JCM 14929 / IAM 14863 / T).